The chain runs to 161 residues: Ribonuclease H (161 aa).

The region spanning 2 to 141 (TNNEIIAATD…ADSLARQAAN (140 aa)) is the RNase H type-1 domain. Residues Asp11, Glu46, Asp69, and Asp133 each coordinate Mg(2+).

It belongs to the RNase H family. In terms of assembly, monomer. Mg(2+) is required as a cofactor.

It localises to the cytoplasm. The enzyme catalyses Endonucleolytic cleavage to 5'-phosphomonoester.. In terms of biological role, endonuclease that specifically degrades the RNA of RNA-DNA hybrids. In Tropheryma whipplei (strain TW08/27) (Whipple's bacillus), this protein is Ribonuclease H.